The following is an 845-amino-acid chain: Protein P (845 aa).

Positions 1-179 are terminal protein domain (TP); that stretch reads MPLSYQHFRK…FCGSPYSWEQ (179 aa). The segment at 180 to 348 is spacer; it reads ELHHGRLVIK…YCLSHLVNLL (169 aa). Positions 349-692 are polymerase/reverse transcriptase domain (RT); the sequence is EDWGPCTEHG…YMNLYPVARQ (344 aa). Positions 359 to 602 constitute a Reverse transcriptase domain; the sequence is EHHIRIPRTP…YSLNFMGYVI (244 aa). Positions 431, 553, and 554 each coordinate Mg(2+).

Belongs to the hepadnaviridae P protein family.

The catalysed reaction is DNA(n) + a 2'-deoxyribonucleoside 5'-triphosphate = DNA(n+1) + diphosphate. It catalyses the reaction Endonucleolytic cleavage to 5'-phosphomonoester.. Activated by host HSP70 and HSP40 in vitro to be able to bind the epsilon loop of the pgRNA. Because deletion of the RNase H region renders the protein partly chaperone-independent, the chaperones may be needed indirectly to relieve occlusion of the RNA-binding site by this domain. Inhibited by several reverse-transcriptase inhibitors: Lamivudine, Adefovir and Entecavir. Multifunctional enzyme that converts the viral RNA genome into dsDNA in viral cytoplasmic capsids. This enzyme displays a DNA polymerase activity that can copy either DNA or RNA templates, and a ribonuclease H (RNase H) activity that cleaves the RNA strand of RNA-DNA heteroduplexes in a partially processive 3'- to 5'-endonucleasic mode. Neo-synthesized pregenomic RNA (pgRNA) are encapsidated together with the P protein, and reverse-transcribed inside the nucleocapsid. Initiation of reverse-transcription occurs first by binding the epsilon loop on the pgRNA genome, and is initiated by protein priming, thereby the 5'-end of (-)DNA is covalently linked to P protein. Partial (+)DNA is synthesized from the (-)DNA template and generates the relaxed circular DNA (RC-DNA) genome. After budding and infection, the RC-DNA migrates in the nucleus, and is converted into a plasmid-like covalently closed circular DNA (cccDNA). The activity of P protein does not seem to be necessary for cccDNA generation, and is presumably released from (+)DNA by host nuclear DNA repair machinery. This chain is Protein P, found in Homo sapiens (Human).